The sequence spans 691 residues: Two-component response regulator ORR21 (691 aa).

Positions 17-132 constitute a Response regulatory domain; that stretch reads KVLVVDDDPT…ELKNIWQHVI (116 aa). Asp-68 carries the 4-aspartylphosphate modification. The segment covering 139–155 has biased composition (basic and acidic residues); it reads NKEHEHSGSLDDTDRTR. Positions 139-204 are disordered; that stretch reads NKEHEHSGSL…DPSSTSKKPR (66 aa). The myb-like GARP DNA-binding region spans 199 to 258; sequence TSKKPRVVWSVELHQQFVNAVNHLGIDKAVPKKILELMNVPGLTRENVASHLQKFRLYLK.

The protein belongs to the ARR family. Type-B subfamily. Two-component system major event consists of a His-to-Asp phosphorelay between a sensor histidine kinase (HK) and a response regulator (RR). In plants, the His-to-Asp phosphorelay involves an additional intermediate named Histidine-containing phosphotransfer protein (HPt). This multistep phosphorelay consists of a His-Asp-His-Asp sequential transfer of a phosphate group between first a His and an Asp of the HK protein, followed by the transfer to a conserved His of the HPt protein and finally the transfer to an Asp in the receiver domain of the RR protein.

It localises to the nucleus. Its function is as follows. Transcriptional activator that binds specific DNA sequence. Functions as a response regulator involved in His-to-Asp phosphorelay signal transduction system. Phosphorylation of the Asp residue in the receiver domain activates the ability of the protein to promote the transcription of target genes. May directly activate some type-A response regulators in response to cytokinins. In Oryza sativa subsp. japonica (Rice), this protein is Two-component response regulator ORR21.